A 585-amino-acid chain; its full sequence is Protein-lysine N-methyltransferase EFM1 (585 aa).

An SET domain is found at 23 to 281 (PKISFRITED…AQDELFNNYG (259 aa)). Y280 serves as a coordination point for S-adenosyl-L-methionine.

It belongs to the class V-like SAM-binding methyltransferase superfamily. RKM1 family.

The protein localises to the cytoplasm. Functionally, S-adenosyl-L-methionine-dependent protein-lysine N-methyltransferase that monomethylates elongation factor 1-alpha (TEF1/TEF2) at 'Lys-30'. The sequence is that of Protein-lysine N-methyltransferase EFM1 from Saccharomyces cerevisiae (strain ATCC 204508 / S288c) (Baker's yeast).